The following is a 418-amino-acid chain: Serine hydroxymethyltransferase (418 aa).

Residues leucine 121 and 125 to 127 (GHL) contribute to the (6S)-5,6,7,8-tetrahydrofolate site. Lysine 230 carries the post-translational modification N6-(pyridoxal phosphate)lysine. Residue 355 to 357 (SPF) participates in (6S)-5,6,7,8-tetrahydrofolate binding.

It belongs to the SHMT family. In terms of assembly, homodimer. Pyridoxal 5'-phosphate serves as cofactor.

Its subcellular location is the cytoplasm. It carries out the reaction (6R)-5,10-methylene-5,6,7,8-tetrahydrofolate + glycine + H2O = (6S)-5,6,7,8-tetrahydrofolate + L-serine. Its pathway is one-carbon metabolism; tetrahydrofolate interconversion. The protein operates within amino-acid biosynthesis; glycine biosynthesis; glycine from L-serine: step 1/1. Catalyzes the reversible interconversion of serine and glycine with tetrahydrofolate (THF) serving as the one-carbon carrier. This reaction serves as the major source of one-carbon groups required for the biosynthesis of purines, thymidylate, methionine, and other important biomolecules. Also exhibits THF-independent aldolase activity toward beta-hydroxyamino acids, producing glycine and aldehydes, via a retro-aldol mechanism. This chain is Serine hydroxymethyltransferase, found in Streptococcus pyogenes serotype M1.